The sequence spans 277 residues: Shikimate dehydrogenase (NADP(+)) (277 aa).

Residues serine 14–serine 16 and threonine 61 contribute to the shikimate site. The active-site Proton acceptor is lysine 65. Aspartate 77 contributes to the NADP(+) binding site. Shikimate-binding residues include asparagine 86 and aspartate 102. NADP(+) is bound by residues glycine 127–alanine 131, asparagine 151–lysine 156, and methionine 215. Position 217 (tyrosine 217) interacts with shikimate. Glycine 239 contacts NADP(+).

Belongs to the shikimate dehydrogenase family. As to quaternary structure, homodimer.

It carries out the reaction shikimate + NADP(+) = 3-dehydroshikimate + NADPH + H(+). It functions in the pathway metabolic intermediate biosynthesis; chorismate biosynthesis; chorismate from D-erythrose 4-phosphate and phosphoenolpyruvate: step 4/7. Involved in the biosynthesis of the chorismate, which leads to the biosynthesis of aromatic amino acids. Catalyzes the reversible NADPH linked reduction of 3-dehydroshikimate (DHSA) to yield shikimate (SA). The chain is Shikimate dehydrogenase (NADP(+)) from Nitrosomonas eutropha (strain DSM 101675 / C91 / Nm57).